We begin with the raw amino-acid sequence, 325 residues long: 5-dehydro-2-deoxygluconokinase (325 aa).

The protein belongs to the carbohydrate kinase PfkB family.

The enzyme catalyses 5-dehydro-2-deoxy-D-gluconate + ATP = 6-phospho-5-dehydro-2-deoxy-D-gluconate + ADP + H(+). The protein operates within polyol metabolism; myo-inositol degradation into acetyl-CoA; acetyl-CoA from myo-inositol: step 5/7. Catalyzes the phosphorylation of 5-dehydro-2-deoxy-D-gluconate (2-deoxy-5-keto-D-gluconate or DKG) to 6-phospho-5-dehydro-2-deoxy-D-gluconate (DKGP). This chain is 5-dehydro-2-deoxygluconokinase, found in Bacillus licheniformis (strain ATCC 14580 / DSM 13 / JCM 2505 / CCUG 7422 / NBRC 12200 / NCIMB 9375 / NCTC 10341 / NRRL NRS-1264 / Gibson 46).